The primary structure comprises 193 residues: DNA damage-inducible transcript 4-like protein (193 aa).

It belongs to the DDIT4 family. As to expression, expressed in heart, skeletal muscle and testis.

It is found in the cytoplasm. In terms of biological role, inhibits cell growth by regulating the TOR signaling pathway upstream of the TSC1-TSC2 complex and downstream of AKT1. The chain is DNA damage-inducible transcript 4-like protein (Ddit4l) from Rattus norvegicus (Rat).